A 273-amino-acid polypeptide reads, in one-letter code: Type II pantothenate kinase (273 aa).

Position 8-15 (8-15) interacts with ATP; that stretch reads DAGGTLTK. Glu-76 functions as the Proton acceptor in the catalytic mechanism. ATP contacts are provided by residues Thr-105, 127–131, Phe-143, and Ser-230; that span reads GGTIM.

This sequence belongs to the type II pantothenate kinase family. As to quaternary structure, homodimer.

The protein resides in the cytoplasm. It carries out the reaction (R)-pantothenate + ATP = (R)-4'-phosphopantothenate + ADP + H(+). It participates in cofactor biosynthesis; coenzyme A biosynthesis; CoA from (R)-pantothenate: step 1/5. Functionally, catalyzes the phosphorylation of pantothenate (Pan), the first step in CoA biosynthesis. This chain is Type II pantothenate kinase, found in Bacillus cereus (strain ATCC 14579 / DSM 31 / CCUG 7414 / JCM 2152 / NBRC 15305 / NCIMB 9373 / NCTC 2599 / NRRL B-3711).